The sequence spans 464 residues: GDNF family receptor alpha-2 (464 aa).

A signal peptide spans 1 to 21 (MILANVFCLFFFLDETLRSLA). Cystine bridges form between C40-C93, C47-C53, C63-C78, C95-C105, C161-C222, C168-C174, C185-C200, C195-C241, C224-C229, C251-C323, C258-C264, C275-C293, C285-C347, and C325-C335. N52 carries an N-linked (GlcNAc...) asparagine glycan. N-linked (GlcNAc...) asparagine glycans are attached at residues N357 and N413. Residue S444 is the site of GPI-anchor amidated serine attachment. Residues 445–464 (RARPSAALTVLSVLMLKLAL) constitute a propeptide, removed in mature form.

It belongs to the GDNFR family. As to quaternary structure, interacts with NRTN ligand and RET: forms a 2:2:2 ternary complex composed of NRTN ligand, GFRA2 and RET receptor. Also forms a 4:4:4 tetrameric complex composed of 4 copies of NRTN ligand, GFRA2 and RET receptor, which prevents endocytosis of RET. Interacts with SORL1.

The protein resides in the cell membrane. In terms of biological role, receptor for neurturin (NRTN), a growth factor that supports the survival of sympathetic neurons. NRTN-binding leads to autophosphorylation and activation of the RET receptor. Also able to mediate GDNF signaling through the RET tyrosine kinase receptor. This chain is GDNF family receptor alpha-2 (GFRA2), found in Pongo abelii (Sumatran orangutan).